Here is a 370-residue protein sequence, read N- to C-terminus: Capsular polysaccharide phosphotransferase (370 aa).

The protein belongs to the stealth family.

Its function is as follows. Part of a capsular polysaccharide synthesis locus. The sequence is that of Capsular polysaccharide phosphotransferase from Actinobacillus suis.